We begin with the raw amino-acid sequence, 202 residues long: Matrix protein (202 aa).

Positions 35–38 match the PPXY motif motif; it reads PPEY. Positions 115–151 are essential for glycoprotein binding; it reads KLRRTLIFQWADSRGPLEGEELEYSQEITWDDDTEFV.

This sequence belongs to the lyssavirus matrix protein family. Homomultimer. Interacts with nucleoprotein and with the cytoplasmic domain of glycoprotein. Interacts with host ATP6V1A; this interaction plays an important role in virion uncoating after viral entry.

The protein localises to the virion membrane. It is found in the host endomembrane system. It localises to the host cytoplasm. Its function is as follows. Plays a major role in assembly, budding and uncoating of virion after membrane fusion. Completely covers the ribonucleoprotein coil and keep it in condensed bullet-shaped form. Inhibits viral transcription and stimulates replication. Plays a major role in early induction of TRAIL-mediated apoptosis in infected neurons. Inhibits the integrated stress response (ISR) in the infected cell by blocking the formation of stress granules. This chain is Matrix protein (M), found in Homo sapiens (Human).